The primary structure comprises 299 residues: Methylsterol monooxygenase 1-2 (299 aa).

3 helical membrane passes run 39–59 (CHNI…LVFI), 96–116 (FILV…MIEI), and 118–138 (SGLP…YFLV). The Fatty acid hydroxylase domain maps to 132–267 (LVVYFLVEDY…FTYCDYIYGT (136 aa)). Positions 147 to 151 (HRFFH) match the Histidine box-1 motif. The short motif at 160-164 (HHIHH) is the Histidine box-2 element. A helical transmembrane segment spans residues 189–209 (TFLGPAIAPGHMITFWLWIAL). The short motif at 239–245 (YHDYHHY) is the Histidine box-3 element.

It belongs to the sterol desaturase family. As to quaternary structure, interacts with ACBP1. The cofactor is Fe cation. As to expression, expressed in embryo sacs, pollen and trichomes. Observed in leaves, roots, siliques and flowers.

It is found in the endoplasmic reticulum membrane. The enzyme catalyses 4,4-dimethyl-5alpha-cholest-7-en-3beta-ol + 6 Fe(II)-[cytochrome b5] + 3 O2 + 5 H(+) = 4alpha-carboxy-4beta-methyl-5alpha-cholest-7-ene-3beta-ol + 6 Fe(III)-[cytochrome b5] + 4 H2O. It carries out the reaction 24-methylenecycloartanol + 6 Fe(II)-[cytochrome b5] + 3 O2 + 5 H(+) = 4alpha-carboxy-4beta,14alpha-dimethyl-9beta,19-cyclo-5alpha-ergost-24(24(1))-en-3beta-ol + 6 Fe(III)-[cytochrome b5] + 4 H2O. Functionally, non-heme iron oxygenase involved in sterols biosynthesis by catalyzing the removal of the first methyl group at the C-4 position. 4,4-dimethyl-9-beta,19-cyclopropylsterols such as 24-methylenecycloartanol are the preferred substrates. Acts as a rate-limiting enzyme in the sterol pathway via interaction with ACBP1; sterols serve as lipid modulators for gene expression of homeodomain-leucine zipper IV transcription factors. Together with SMO1-1, involved in the maintenance of sterol composition to balance auxin and cytokinin activities during embryogenesis. The protein is Methylsterol monooxygenase 1-2 of Arabidopsis thaliana (Mouse-ear cress).